Reading from the N-terminus, the 308-residue chain is Ribonuclease HIII (308 aa).

The RNase H type-2 domain occupies 91–308 (KNVIGSDEVG…TEKALKMVKK (218 aa)). Asp-97, Glu-98, and Asp-202 together coordinate a divalent metal cation.

It belongs to the RNase HII family. RnhC subfamily. Requires Mn(2+) as cofactor. It depends on Mg(2+) as a cofactor.

The protein resides in the cytoplasm. The catalysed reaction is Endonucleolytic cleavage to 5'-phosphomonoester.. In terms of biological role, endonuclease that specifically degrades the RNA of RNA-DNA hybrids. In Listeria monocytogenes serotype 4b (strain F2365), this protein is Ribonuclease HIII.